Consider the following 248-residue polypeptide: 2,3-bisphosphoglycerate-dependent phosphoglycerate mutase (248 aa).

Residues 8–15, 21–22, R60, 87–90, K98, 114–115, and 183–184 contribute to the substrate site; these read RHGESEWN, TG, ERHY, RR, and GN. H9 serves as the catalytic Tele-phosphohistidine intermediate. The active-site Proton donor/acceptor is E87.

It belongs to the phosphoglycerate mutase family. BPG-dependent PGAM subfamily.

It catalyses the reaction (2R)-2-phosphoglycerate = (2R)-3-phosphoglycerate. It functions in the pathway carbohydrate degradation; glycolysis; pyruvate from D-glyceraldehyde 3-phosphate: step 3/5. In terms of biological role, catalyzes the interconversion of 2-phosphoglycerate and 3-phosphoglycerate. In Borrelia turicatae (strain 91E135), this protein is 2,3-bisphosphoglycerate-dependent phosphoglycerate mutase.